Reading from the N-terminus, the 370-residue chain is Pulmonary surfactant-associated protein B (370 aa).

Positions methionine 1–alanine 24 are cleaved as a signal peptide. Positions valine 25 to arginine 184 are excised as a propeptide. The Saposin A-type domain maps to tryptophan 26–alanine 66. Saposin B-type domains lie at alanine 66–serine 148, proline 188–aspartate 265, and glutamine 284–leucine 359. Disulfide bonds link cysteine 70-cysteine 144, cysteine 73-cysteine 138, cysteine 101-cysteine 113, cysteine 192-cysteine 261, cysteine 195-cysteine 255, cysteine 219-cysteine 230, cysteine 288-cysteine 355, cysteine 291-cysteine 349, and cysteine 314-cysteine 324. Residues valine 264 to phenylalanine 370 constitute a propeptide that is removed on maturation. Asparagine 300 carries N-linked (GlcNAc...) asparagine glycosylation.

Homodimer; disulfide-linked.

The protein resides in the secreted. The protein localises to the extracellular space. It localises to the surface film. In terms of biological role, pulmonary surfactant-associated proteins promote alveolar stability by lowering the surface tension at the air-liquid interface in the peripheral air spaces. SP-B increases the collapse pressure of palmitic acid to nearly 70 millinewtons per meter. In Oryctolagus cuniculus (Rabbit), this protein is Pulmonary surfactant-associated protein B (SFTPB).